An 861-amino-acid chain; its full sequence is Seed linoleate 9S-lipoxygenase-3 (861 aa).

The PLAT domain maps to 41–166 (QGFDILGSTV…HHKIDRIFFA (126 aa)). One can recognise a Lipoxygenase domain in the interval 169–861 (TYLPSETPAP…FRGIPNSISI (693 aa)). The segment at 215–257 (NPDSGENHARPVLGGSETYPYPRRGRTGRKPTRKDPNSESRSD) is disordered. Residues 237 to 246 (RRGRTGRKPT) are compositionally biased toward basic residues. The segment covering 247 to 257 (RKDPNSESRSD) has biased composition (basic and acidic residues). The Fe cation site is built by His-522, His-527, His-713, Asn-717, and Ile-861.

It belongs to the lipoxygenase family. The cofactor is Fe cation.

The protein localises to the cytoplasm. It catalyses the reaction (9Z,12Z)-octadecadienoate + O2 = (9S)-hydroperoxy-(10E,12Z)-octadecadienoate. It participates in lipid metabolism; oxylipin biosynthesis. Functionally, plant lipoxygenase may be involved in a number of diverse aspects of plant physiology including growth and development, pest resistance, and senescence or responses to wounding. It catalyzes the hydroperoxidation of lipids containing a cis,cis-1,4-pentadiene structure. In Pisum sativum (Garden pea), this protein is Seed linoleate 9S-lipoxygenase-3 (LOX1.3).